The sequence spans 210 residues: Endo-1,4-beta-xylanase A (210 aa).

A signal peptide spans 1-19 (MKLKKKMLTLLLTASMSFG). Residues 20–210 (LFGATSSAAT…SSGRSNVTVW (191 aa)) enclose the GH11 domain. Glu104 (nucleophile) is an active-site residue. Catalysis depends on Glu197, which acts as the Proton donor.

This sequence belongs to the glycosyl hydrolase 11 (cellulase G) family.

The enzyme catalyses Endohydrolysis of (1-&gt;4)-beta-D-xylosidic linkages in xylans.. Its pathway is glycan degradation; xylan degradation. This is Endo-1,4-beta-xylanase A (xynA) from Geobacillus stearothermophilus (Bacillus stearothermophilus).